The chain runs to 164 residues: Transcriptional regulator MraZ (164 aa).

SpoVT-AbrB domains are found at residues H7–E60 and S83–R126. Positions L141–E164 are disordered. Over residues A154 to E164 the composition is skewed to pro residues.

This sequence belongs to the MraZ family. As to quaternary structure, forms oligomers.

Its subcellular location is the cytoplasm. The protein localises to the nucleoid. The sequence is that of Transcriptional regulator MraZ from Beijerinckia indica subsp. indica (strain ATCC 9039 / DSM 1715 / NCIMB 8712).